Consider the following 591-residue polypeptide: Protein CBFA2T3 (591 aa).

The disordered stretch occupies residues 1 to 105 (MPGGTPRLEG…SSSASLSTHQ (105 aa)). The tract at residues 1–381 (MPGGTPRLEG…ADREELNHWI (381 aa)) is mediates localization to the nucleus. The span at 41–52 (STPPNMPPPPPA) shows a compositional bias: pro residues. Positions 55-105 (QGATRHPSFTPSTMMNGSSHSPTAINGAPSTPNGFSNGPATSSSASLSTHQ) are enriched in polar residues. The TAFH domain maps to 112–207 (ARQLSKLKRF…SPAQYLAQHE (96 aa)). 2 disordered regions span residues 226-291 (LEVS…PPQH) and 386-420 (DAEDMKKGSPPSARPHNSSSSSEAPQLDVHRDFAP). Basic and acidic residues predominate over residues 230–256 (ESGKRRTPDRTKENGLDRDPLHPEHLS). Residues 263-274 (SPAQRYSPSNGL) are compositionally biased toward polar residues. The segment covering 279-290 (NGLPHPPGPPPQ) has biased composition (pro residues). Residues 394–410 (SPPSARPHNSSSSSEAP) show a composition bias toward low complexity. The stretch at 433–488 (RKAEEAVNEVKRQAMSELQKAVSDAERKAHELITTERAKMERALAEAKRQASEDAL) forms a coiled coil. 8 residues coordinate Zn(2+): cysteine 501, cysteine 504, cysteine 512, cysteine 515, cysteine 521, cysteine 525, histidine 533, and cysteine 537. The segment at 501 to 537 (CWNCGRKASETCSGCNTARYCGSFCQHKDWEKHHHVC) adopts an MYND-type zinc-finger fold. Positions 548 to 591 (SVPTAVGQPEAVPPMASSPSDAGSAGASRAGTPGTPAPLESASR) are disordered. A compositionally biased stretch (low complexity) spans 560–585 (PPMASSPSDAGSAGASRAGTPGTPAP).

It belongs to the CBFA2T family.

Its subcellular location is the nucleus. The protein localises to the nucleolus. It localises to the nucleoplasm. The protein resides in the golgi apparatus. Its function is as follows. Functions as a transcriptional repressor. Regulates the proliferation and the differentiation of erythroid progenitors. Plays a role in granulocyte differentiation. May also function as an A-kinase-anchoring protein. This chain is Protein CBFA2T3 (CBFA2T3), found in Gallus gallus (Chicken).